The chain runs to 361 residues: Phospho-N-acetylmuramoyl-pentapeptide-transferase (361 aa).

Helical transmembrane passes span 25–45 (RGIL…PAVI), 73–93 (TMGG…WGDL), 98–118 (VWLV…DDWI), 139–159 (IFGL…AAIT), 168–188 (IALP…IVGF), 200–220 (GLAI…AYAS), 237–257 (AGEL…FLWF), 264–284 (VFMG…IAVI), 289–309 (MVLV…IIQV), and 339–359 (VIVR…ATLK).

It belongs to the glycosyltransferase 4 family. MraY subfamily. The cofactor is Mg(2+).

The protein localises to the cell inner membrane. The enzyme catalyses UDP-N-acetyl-alpha-D-muramoyl-L-alanyl-gamma-D-glutamyl-meso-2,6-diaminopimeloyl-D-alanyl-D-alanine + di-trans,octa-cis-undecaprenyl phosphate = di-trans,octa-cis-undecaprenyl diphospho-N-acetyl-alpha-D-muramoyl-L-alanyl-D-glutamyl-meso-2,6-diaminopimeloyl-D-alanyl-D-alanine + UMP. The protein operates within cell wall biogenesis; peptidoglycan biosynthesis. Catalyzes the initial step of the lipid cycle reactions in the biosynthesis of the cell wall peptidoglycan: transfers peptidoglycan precursor phospho-MurNAc-pentapeptide from UDP-MurNAc-pentapeptide onto the lipid carrier undecaprenyl phosphate, yielding undecaprenyl-pyrophosphoryl-MurNAc-pentapeptide, known as lipid I. This is Phospho-N-acetylmuramoyl-pentapeptide-transferase from Xanthomonas oryzae pv. oryzae (strain PXO99A).